A 425-amino-acid polypeptide reads, in one-letter code: UDP-N-acetylglucosamine 1-carboxyvinyltransferase (425 aa).

25–26 (KN) serves as a coordination point for phosphoenolpyruvate. Arginine 95 serves as a coordination point for UDP-N-acetyl-alpha-D-glucosamine. Cysteine 119 serves as the catalytic Proton donor. Position 119 is a 2-(S-cysteinyl)pyruvic acid O-phosphothioketal (cysteine 119). UDP-N-acetyl-alpha-D-glucosamine contacts are provided by residues 124 to 128 (RPVDQ), aspartate 306, and isoleucine 328.

The protein belongs to the EPSP synthase family. MurA subfamily.

It localises to the cytoplasm. It catalyses the reaction phosphoenolpyruvate + UDP-N-acetyl-alpha-D-glucosamine = UDP-N-acetyl-3-O-(1-carboxyvinyl)-alpha-D-glucosamine + phosphate. It participates in cell wall biogenesis; peptidoglycan biosynthesis. Cell wall formation. Adds enolpyruvyl to UDP-N-acetylglucosamine. The polypeptide is UDP-N-acetylglucosamine 1-carboxyvinyltransferase (Thermus thermophilus (strain ATCC 27634 / DSM 579 / HB8)).